The chain runs to 228 residues: Probable septum site-determining protein MinC (228 aa).

Belongs to the MinC family. In terms of assembly, interacts with MinD and FtsZ.

In terms of biological role, cell division inhibitor that blocks the formation of polar Z ring septums. Rapidly oscillates between the poles of the cell to destabilize FtsZ filaments that have formed before they mature into polar Z rings. Prevents FtsZ polymerization. In Bacillus mycoides (strain KBAB4) (Bacillus weihenstephanensis), this protein is Probable septum site-determining protein MinC.